The chain runs to 327 residues: RNA ligase 1 (327 aa).

Mg(2+) serves as cofactor. The cofactor is Mn(2+). AMPylates itself (auto-AMPylation).

It carries out the reaction ATP + (ribonucleotide)n-3'-hydroxyl + 5'-phospho-(ribonucleotide)m = (ribonucleotide)n+m + AMP + diphosphate.. Functionally, functions as an RNA ligase, in vitro. The ligation reaction entails three nucleotidyl transfer steps. In the first step, the RNA ligase reacts with ATP in the absence of nucleic acid to form a covalent ligase-AMP intermediate and release pyrophosphate. In step 2, the ligase-AMP binds to the nucleic acid and transfers the adenylate to the 5'-PO4 terminus to form an adenylylated intermediate. In step 3, the RNA ligase directs the attack of the 3'-OH on the 5'-phosphoanhydride linkage, resulting in a repaired 3'-5' phosphodiester and release of AMP. Exhibits selectivity for single-stranded RNA substrates and may not have nick-sealing activity on double-stranded DNA-RNA hybrids. May play a role in maintaining RNA integrity under stress conditions, for example in response to reactive oxygen species (ROS). This is RNA ligase 1 from Mus musculus (Mouse).